An 87-amino-acid chain; its full sequence is Small ribosomal subunit protein bS20 (87 aa).

The segment at M1–K22 is disordered.

The protein belongs to the bacterial ribosomal protein bS20 family.

Its function is as follows. Binds directly to 16S ribosomal RNA. The polypeptide is Small ribosomal subunit protein bS20 (Ruegeria sp. (strain TM1040) (Silicibacter sp.)).